A 385-amino-acid polypeptide reads, in one-letter code: GTPase Obg (385 aa).

Positions 1 to 159 (MKFVDEVEIR…RNLKLELLLL (159 aa)) constitute an Obg domain. An OBG-type G domain is found at 160 to 333 (ADVGLLGLPN…LIHDVMTLLE (174 aa)). Residues 166 to 173 (GLPNAGKS), 191 to 195 (FTTLI), 213 to 216 (DIPG), 283 to 286 (NKID), and 314 to 316 (SAI) contribute to the GTP site. Mg(2+)-binding residues include Ser-173 and Thr-193.

The protein belongs to the TRAFAC class OBG-HflX-like GTPase superfamily. OBG GTPase family. In terms of assembly, monomer. It depends on Mg(2+) as a cofactor.

It is found in the cytoplasm. An essential GTPase which binds GTP, GDP and possibly (p)ppGpp with moderate affinity, with high nucleotide exchange rates and a fairly low GTP hydrolysis rate. Plays a role in control of the cell cycle, stress response, ribosome biogenesis and in those bacteria that undergo differentiation, in morphogenesis control. In Pseudoalteromonas translucida (strain TAC 125), this protein is GTPase Obg.